We begin with the raw amino-acid sequence, 266 residues long: Phosphatidylglycerol--prolipoprotein diacylglyceryl transferase (266 aa).

7 helical membrane-spanning segments follow: residues 19 to 39, 61 to 81, 91 to 111, 125 to 145, 176 to 196, 204 to 224, and 237 to 257; these read IWGP…FAFA, LMFW…TLFY, LYLF…LGVI, FLQV…FGRI, PSQL…ILWF, GAVS…VEFF, and GMSM…ILMV. An a 1,2-diacyl-sn-glycero-3-phospho-(1'-sn-glycerol)-binding site is contributed by Arg-144.

Belongs to the Lgt family.

The protein resides in the cell inner membrane. The catalysed reaction is L-cysteinyl-[prolipoprotein] + a 1,2-diacyl-sn-glycero-3-phospho-(1'-sn-glycerol) = an S-1,2-diacyl-sn-glyceryl-L-cysteinyl-[prolipoprotein] + sn-glycerol 1-phosphate + H(+). It functions in the pathway protein modification; lipoprotein biosynthesis (diacylglyceryl transfer). Its function is as follows. Catalyzes the transfer of the diacylglyceryl group from phosphatidylglycerol to the sulfhydryl group of the N-terminal cysteine of a prolipoprotein, the first step in the formation of mature lipoproteins. This Idiomarina loihiensis (strain ATCC BAA-735 / DSM 15497 / L2-TR) protein is Phosphatidylglycerol--prolipoprotein diacylglyceryl transferase.